Consider the following 72-residue polypeptide: Translation initiation factor IF-1 (72 aa).

The region spanning 1 to 72 (MAKEELLEFP…TKGRINYRFK (72 aa)) is the S1-like domain.

It belongs to the IF-1 family. As to quaternary structure, component of the 30S ribosomal translation pre-initiation complex which assembles on the 30S ribosome in the order IF-2 and IF-3, IF-1 and N-formylmethionyl-tRNA(fMet); mRNA recruitment can occur at any time during PIC assembly.

Its subcellular location is the cytoplasm. In terms of biological role, one of the essential components for the initiation of protein synthesis. Stabilizes the binding of IF-2 and IF-3 on the 30S subunit to which N-formylmethionyl-tRNA(fMet) subsequently binds. Helps modulate mRNA selection, yielding the 30S pre-initiation complex (PIC). Upon addition of the 50S ribosomal subunit IF-1, IF-2 and IF-3 are released leaving the mature 70S translation initiation complex. The polypeptide is Translation initiation factor IF-1 (Dinoroseobacter shibae (strain DSM 16493 / NCIMB 14021 / DFL 12)).